The primary structure comprises 263 residues: Zinc import ATP-binding protein ZnuC (263 aa).

The ABC transporter domain maps to 11–226 (VELKNINVVF…PTFIHFFGDQ (216 aa)). 43–50 (GPNGGGKS) serves as a coordination point for ATP.

Belongs to the ABC transporter superfamily. Zinc importer (TC 3.A.1.15.5) family. In terms of assembly, the complex is composed of two ATP-binding proteins (ZnuC), two transmembrane proteins (ZnuB) and a solute-binding protein (ZnuA).

The protein localises to the cell inner membrane. The enzyme catalyses Zn(2+)(out) + ATP(in) + H2O(in) = Zn(2+)(in) + ADP(in) + phosphate(in) + H(+)(in). Functionally, part of the ABC transporter complex ZnuABC involved in zinc import. Responsible for energy coupling to the transport system. This is Zinc import ATP-binding protein ZnuC from Pasteurella multocida (strain Pm70).